Here is a 177-residue protein sequence, read N- to C-terminus: ATP synthase subunit delta (177 aa).

This sequence belongs to the ATPase delta chain family. F-type ATPases have 2 components, F(1) - the catalytic core - and F(0) - the membrane proton channel. F(1) has five subunits: alpha(3), beta(3), gamma(1), delta(1), epsilon(1). F(0) has three main subunits: a(1), b(2) and c(10-14). The alpha and beta chains form an alternating ring which encloses part of the gamma chain. F(1) is attached to F(0) by a central stalk formed by the gamma and epsilon chains, while a peripheral stalk is formed by the delta and b chains.

It localises to the cell inner membrane. F(1)F(0) ATP synthase produces ATP from ADP in the presence of a proton or sodium gradient. F-type ATPases consist of two structural domains, F(1) containing the extramembraneous catalytic core and F(0) containing the membrane proton channel, linked together by a central stalk and a peripheral stalk. During catalysis, ATP synthesis in the catalytic domain of F(1) is coupled via a rotary mechanism of the central stalk subunits to proton translocation. Functionally, this protein is part of the stalk that links CF(0) to CF(1). It either transmits conformational changes from CF(0) to CF(1) or is implicated in proton conduction. The polypeptide is ATP synthase subunit delta (Shewanella putrefaciens (strain CN-32 / ATCC BAA-453)).